Reading from the N-terminus, the 350-residue chain is Biotin synthase (350 aa).

Positions 41 to 268 constitute a Radical SAM core domain; it reads NEVQISRLLS…LSRVRLSAGR (228 aa). [4Fe-4S] cluster-binding residues include C56, C60, and C63. Residues C100, C131, C191, and R263 each coordinate [2Fe-2S] cluster.

This sequence belongs to the radical SAM superfamily. Biotin synthase family. In terms of assembly, homodimer. [4Fe-4S] cluster is required as a cofactor. Requires [2Fe-2S] cluster as cofactor.

The enzyme catalyses (4R,5S)-dethiobiotin + (sulfur carrier)-SH + 2 reduced [2Fe-2S]-[ferredoxin] + 2 S-adenosyl-L-methionine = (sulfur carrier)-H + biotin + 2 5'-deoxyadenosine + 2 L-methionine + 2 oxidized [2Fe-2S]-[ferredoxin]. The protein operates within cofactor biosynthesis; biotin biosynthesis; biotin from 7,8-diaminononanoate: step 2/2. In terms of biological role, catalyzes the conversion of dethiobiotin (DTB) to biotin by the insertion of a sulfur atom into dethiobiotin via a radical-based mechanism. The polypeptide is Biotin synthase (Shewanella baltica (strain OS223)).